The sequence spans 412 residues: Thyroxine-binding globulin (412 aa).

The first 16 residues, 1–16 (MPLFLYMVLLVLGIHC), serve as a signal peptide directing secretion. 5 N-linked (GlcNAc...) asparagine glycosylation sites follow: Asn-20, Asn-35, Asn-98, Asn-164, and Asn-252. Residues Asn-292 and Lys-395 each contribute to the thyroxine site.

The protein belongs to the serpin family. In terms of tissue distribution, expressed by the liver and secreted in plasma.

The protein localises to the secreted. Major thyroid hormone transport protein in serum. The chain is Thyroxine-binding globulin (SERPINA7) from Sus scrofa (Pig).